A 90-amino-acid chain; its full sequence is Small ribosomal subunit protein uS17 (90 aa).

This sequence belongs to the universal ribosomal protein uS17 family. Part of the 30S ribosomal subunit.

In terms of biological role, one of the primary rRNA binding proteins, it binds specifically to the 5'-end of 16S ribosomal RNA. This chain is Small ribosomal subunit protein uS17, found in Paraburkholderia phytofirmans (strain DSM 17436 / LMG 22146 / PsJN) (Burkholderia phytofirmans).